Here is a 200-residue protein sequence, read N- to C-terminus: Superoxide dismutase [Mn] (200 aa).

Residues histidine 27, histidine 77, aspartate 160, and histidine 164 each contribute to the Mn(2+) site.

It belongs to the iron/manganese superoxide dismutase family. In terms of assembly, homodimer. Mn(2+) is required as a cofactor.

The catalysed reaction is 2 superoxide + 2 H(+) = H2O2 + O2. Functionally, destroys superoxide anion radicals which are normally produced within the cells and which are toxic to biological systems. The sequence is that of Superoxide dismutase [Mn] (sodB) from Rhizobium meliloti (strain 1021) (Ensifer meliloti).